The primary structure comprises 163 residues: 5-hydroxymethyl-dUMP N-hydrolase (163 aa).

An N-acetylalanine modification is found at A2. 5-hydroxymethyl-dUMP is bound at residue G16. S17 carries the post-translational modification Phosphoserine. I18, R19, G20, S87, G89, and E93 together coordinate 5-hydroxymethyl-dUMP. S87 is modified (phosphoserine). A phosphoserine mark is found at S112, S117, S127, and S158. S117 is a 5-hydroxymethyl-dUMP binding site.

As to quaternary structure, monomer and homodimer. Highly expressed in heart, kidney, liver and spleen. Weakly expressed in lung and skeletal muscle.

It is found in the cytoplasm. Its subcellular location is the nucleus. The enzyme catalyses 5-hydroxymethyl-dUMP + H2O = 5-hydroxymethyluracil + 2-deoxy-D-ribose 5-phosphate. Part of a nucleotide salvage pathway that eliminates epigenetically modified 5-hydroxymethyl-dCMP (hmdCMP) in a two-step process entailing deamination to cytotoxic 5-hydroxymethyl-dUMP (hmdUMP), followed by its hydrolysis into 5-hydroxymethyluracil (hmU) and 2-deoxy-D-ribose 5-phosphate (deoxyribosephosphate). Catalyzes the second step in that pathway, the hydrolysis of the N-glycosidic bond in hmdUMP, degrading this cytotoxic nucleotide to avoid its genomic integration. The sequence is that of 5-hydroxymethyl-dUMP N-hydrolase from Rattus norvegicus (Rat).